The following is a 618-amino-acid chain: DNA mismatch repair protein MutL (618 aa).

This sequence belongs to the DNA mismatch repair MutL/HexB family.

Functionally, this protein is involved in the repair of mismatches in DNA. It is required for dam-dependent methyl-directed DNA mismatch repair. May act as a 'molecular matchmaker', a protein that promotes the formation of a stable complex between two or more DNA-binding proteins in an ATP-dependent manner without itself being part of a final effector complex. The polypeptide is DNA mismatch repair protein MutL (Porphyromonas gingivalis (strain ATCC 33277 / DSM 20709 / CIP 103683 / JCM 12257 / NCTC 11834 / 2561)).